We begin with the raw amino-acid sequence, 798 residues long: Translation initiation factor IF-2 (798 aa).

The segment at 40 to 207 is disordered; it reads SEQETKLRQA…QQESAKPAVP (168 aa). Residues 57–186 show a composition bias toward low complexity; the sequence is NTQSKATNNQ…RNNFNNQNRN (130 aa). Residues 187 to 196 show a composition bias toward basic residues; sequence RFNKKGKKGK. Residues 300 to 469 enclose the tr-type G domain; the sequence is TRPPVVTIMG…LLIAEVEDLK (170 aa). The segment at 309-316 is G1; it reads GHVDHGKT. 309 to 316 provides a ligand contact to GTP; it reads GHVDHGKT. Residues 334 to 338 form a G2 region; the sequence is GITQH. The G3 stretch occupies residues 355-358; the sequence is DTPG. GTP contacts are provided by residues 355 to 359 and 409 to 412; these read DTPGH and NKID. The segment at 409–412 is G4; the sequence is NKID. Positions 445-447 are G5; it reads SAK.

It belongs to the TRAFAC class translation factor GTPase superfamily. Classic translation factor GTPase family. IF-2 subfamily.

The protein localises to the cytoplasm. In terms of biological role, one of the essential components for the initiation of protein synthesis. Protects formylmethionyl-tRNA from spontaneous hydrolysis and promotes its binding to the 30S ribosomal subunits. Also involved in the hydrolysis of GTP during the formation of the 70S ribosomal complex. In Enterococcus faecalis (strain ATCC 700802 / V583), this protein is Translation initiation factor IF-2.